A 233-amino-acid polypeptide reads, in one-letter code: MSVYVLIPAAGMGRRMGASVNKQYLPLGDRPVLSHTIALFDRHPGIDHIFVICPEAEFPLCRREVIDPYDFRKVRGLVAGGAERQDSVRNGLQACQAAEGDIVLIHDGARPLLPPALIEPTVAAAQQCGAAIVGVPVKDTIKLVTDGMIDSTPDRSLLWQAQTPQAFRFGLIRDAHAQALQQHHKGTDDASLIEWLGGRVAMIEGSYRNIKITTPEDLVLAQAFLDTPGDFQA.

This sequence belongs to the IspD/TarI cytidylyltransferase family. IspD subfamily.

The enzyme catalyses 2-C-methyl-D-erythritol 4-phosphate + CTP + H(+) = 4-CDP-2-C-methyl-D-erythritol + diphosphate. The protein operates within isoprenoid biosynthesis; isopentenyl diphosphate biosynthesis via DXP pathway; isopentenyl diphosphate from 1-deoxy-D-xylulose 5-phosphate: step 2/6. Catalyzes the formation of 4-diphosphocytidyl-2-C-methyl-D-erythritol from CTP and 2-C-methyl-D-erythritol 4-phosphate (MEP). This chain is 2-C-methyl-D-erythritol 4-phosphate cytidylyltransferase, found in Syntrophotalea carbinolica (strain DSM 2380 / NBRC 103641 / GraBd1) (Pelobacter carbinolicus).